A 185-amino-acid chain; its full sequence is Peptidyl-tRNA hydrolase (185 aa).

Phenylalanine 12 lines the tRNA pocket. Catalysis depends on histidine 17, which acts as the Proton acceptor. Residues tyrosine 61, asparagine 63, and asparagine 109 each contribute to the tRNA site.

Belongs to the PTH family. Monomer.

The protein localises to the cytoplasm. The catalysed reaction is an N-acyl-L-alpha-aminoacyl-tRNA + H2O = an N-acyl-L-amino acid + a tRNA + H(+). Functionally, hydrolyzes ribosome-free peptidyl-tRNAs (with 1 or more amino acids incorporated), which drop off the ribosome during protein synthesis, or as a result of ribosome stalling. Catalyzes the release of premature peptidyl moieties from peptidyl-tRNA molecules trapped in stalled 50S ribosomal subunits, and thus maintains levels of free tRNAs and 50S ribosomes. The polypeptide is Peptidyl-tRNA hydrolase (Borrelia garinii subsp. bavariensis (strain ATCC BAA-2496 / DSM 23469 / PBi) (Borreliella bavariensis)).